The following is a 228-amino-acid chain: Phosphoglycolate phosphatase (228 aa).

The Nucleophile role is filled by aspartate 12. Residues aspartate 12, aspartate 14, and aspartate 177 each coordinate Mg(2+).

The protein belongs to the HAD-like hydrolase superfamily. CbbY/CbbZ/Gph/YieH family. Requires Mg(2+) as cofactor.

It carries out the reaction 2-phosphoglycolate + H2O = glycolate + phosphate. The protein operates within organic acid metabolism; glycolate biosynthesis; glycolate from 2-phosphoglycolate: step 1/1. Functionally, specifically catalyzes the dephosphorylation of 2-phosphoglycolate. Is involved in the dissimilation of the intracellular 2-phosphoglycolate formed during the DNA repair of 3'-phosphoglycolate ends, a major class of DNA lesions induced by oxidative stress. In Vibrio vulnificus (strain YJ016), this protein is Phosphoglycolate phosphatase.